The sequence spans 389 residues: Mating-type protein MAT-1 (389 aa).

Positions 70–127 (KAKKALNAFVGFRCYYISIPHFKSWPMKKLSNLIGLLWETDPNKSLWSLMTKAWSAIR) form a DNA-binding region, alpha box.

This sequence belongs to the MATALPHA1 family.

It localises to the nucleus. Functionally, mating type proteins are sequence specific DNA-binding proteins that act as master switches in fungal differentiation by controlling gene expression in a cell type-specific fashion. Transcriptional activator that induces the transcription of alpha-specific genes. This is Mating-type protein MAT-1 (MAT1) from Alternaria alternata (Alternaria rot fungus).